The chain runs to 172 residues: GTP-dependent dephospho-CoA kinase (172 aa).

D49, V50, V51, D68, K70, and E120 together coordinate GTP.

This sequence belongs to the GTP-dependent DPCK family.

The enzyme catalyses 3'-dephospho-CoA + GTP = GDP + CoA + H(+). The protein operates within cofactor biosynthesis; coenzyme A biosynthesis. Catalyzes the GTP-dependent phosphorylation of the 3'-hydroxyl group of dephosphocoenzyme A to form coenzyme A (CoA). The protein is GTP-dependent dephospho-CoA kinase of Pyrobaculum arsenaticum (strain DSM 13514 / JCM 11321 / PZ6).